A 463-amino-acid polypeptide reads, in one-letter code: RuvB-like helicase 2 (463 aa).

76 to 83 (GPPSTGKT) serves as a coordination point for ATP.

Belongs to the RuvB family. As to quaternary structure, may form heterododecamers with RVB1. Component of the SWR1 chromatin remodeling complex, the INO80 chromatin remodeling complex, and of the R2TP complex.

The protein localises to the nucleus. It catalyses the reaction ATP + H2O = ADP + phosphate + H(+). DNA helicase which participates in several chromatin remodeling complexes, including the SWR1 and the INO80 complexes. The SWR1 complex mediates the ATP-dependent exchange of histone H2A for the H2A variant HZT1 leading to transcriptional regulation of selected genes by chromatin remodeling. The INO80 complex remodels chromatin by shifting nucleosomes and is involved in DNA repair. Also involved in pre-rRNA processing. The chain is RuvB-like helicase 2 (RVB2) from Cryptococcus neoformans var. neoformans serotype D (strain JEC21 / ATCC MYA-565) (Filobasidiella neoformans).